Reading from the N-terminus, the 421-residue chain is Chitin deacetylase (421 aa).

The signal sequence occupies residues 1–21; the sequence is MQIKTFALSAAIAQVATLALA. N-linked (GlcNAc...) asparagine glycosylation is found at Asn39, Asn70, Asn87, and Asn106. The 193-residue stretch at 157–349 folds into the NodB homology domain; it reads ETWGLTYDDG…YKQVIDVATC (193 aa). Asp164 acts as the Proton acceptor in catalysis. Asp164 lines the acetate pocket. Residue Asp165 participates in Co(2+) binding. N-linked (GlcNAc...) asparagine glycosylation occurs at Asn168. His214 and His218 together coordinate Co(2+). Tyr255 is a binding site for acetate. A glycan (N-linked (GlcNAc...) asparagine) is linked at Asn307. The Proton donor role is filled by His320. Residues Asn323, Asn351, and Asn367 are each glycosylated (N-linked (GlcNAc...) asparagine). The GPI-anchor amidated threonine moiety is linked to residue Thr390. The propeptide at 391-421 is removed in mature form; that stretch reads AAAHIQASTSGAMSVLPNLALISAFIATLLF.

It belongs to the polysaccharide deacetylase family. Requires Co(2+) as cofactor.

It localises to the secreted. The protein localises to the cell wall. Its subcellular location is the cell membrane. It carries out the reaction [(1-&gt;4)-N-acetyl-beta-D-glucosaminyl](n) + n H2O = chitosan + n acetate. Functionally, hydrolyzes the N-acetamido groups of N-acetyl-D-glucosamine residues in chitin to form chitosan and acetate. This Amylomyces rouxii (Filamentous fungus) protein is Chitin deacetylase.